We begin with the raw amino-acid sequence, 631 residues long: DNA mismatch repair protein MutL (631 aa).

The segment at 389–423 is disordered; the sequence is GEREASRQAGGQRVQETQMSSYGSGQSGGRGRSYA.

It belongs to the DNA mismatch repair MutL/HexB family.

In terms of biological role, this protein is involved in the repair of mismatches in DNA. It is required for dam-dependent methyl-directed DNA mismatch repair. May act as a 'molecular matchmaker', a protein that promotes the formation of a stable complex between two or more DNA-binding proteins in an ATP-dependent manner without itself being part of a final effector complex. This chain is DNA mismatch repair protein MutL, found in Shewanella loihica (strain ATCC BAA-1088 / PV-4).